Consider the following 251-residue polypeptide: Triosephosphate isomerase (251 aa).

9-11 (NWK) contacts substrate. H95 functions as the Electrophile in the catalytic mechanism. Residue E167 is the Proton acceptor of the active site. Residues G173, S212, and 233-234 (GG) contribute to the substrate site.

It belongs to the triosephosphate isomerase family. As to quaternary structure, homodimer.

The protein localises to the cytoplasm. It catalyses the reaction D-glyceraldehyde 3-phosphate = dihydroxyacetone phosphate. The protein operates within carbohydrate biosynthesis; gluconeogenesis. It participates in carbohydrate degradation; glycolysis; D-glyceraldehyde 3-phosphate from glycerone phosphate: step 1/1. Involved in the gluconeogenesis. Catalyzes stereospecifically the conversion of dihydroxyacetone phosphate (DHAP) to D-glyceraldehyde-3-phosphate (G3P). This Pseudomonas paraeruginosa (strain DSM 24068 / PA7) (Pseudomonas aeruginosa (strain PA7)) protein is Triosephosphate isomerase.